The sequence spans 401 residues: Putative phosphatidylinositol 4-phosphate 5-kinase 11 (401 aa).

A PIPK domain is found at 1 to 390; it reads MELRATVENR…RFQDFVSNIF (390 aa). A compositionally biased stretch (polar residues) spans 242-260; it reads SFKSNSTKSMKTASSSPDR. The tract at residues 242-268 is disordered; it reads SFKSNSTKSMKTASSSPDRSSVAMYSC. Positions 350-371 are activation loop; that stretch reads YGMKKRIEHCYKSIQYNSNSIS.

The enzyme catalyses a 1,2-diacyl-sn-glycero-3-phospho-(1D-myo-inositol 4-phosphate) + ATP = a 1,2-diacyl-sn-glycero-3-phospho-(1D-myo-inositol-4,5-bisphosphate) + ADP + H(+). The polypeptide is Putative phosphatidylinositol 4-phosphate 5-kinase 11 (PIP5K11) (Arabidopsis thaliana (Mouse-ear cress)).